A 421-amino-acid polypeptide reads, in one-letter code: Subtilisin-like protease 2 (421 aa).

The signal sequence occupies residues 1 to 16 (MQLLNFGLLLLPFVAG). Residues 17-122 (DLAPQPEPLL…VHPDQHVYLA (106 aa)) constitute a propeptide that is removed on maturation. The 87-residue stretch at 36–122 (QYIVTLKEGL…VHPDQHVYLA (87 aa)) folds into the Inhibitor I9 domain. The Peptidase S8 domain occupies 131–421 (RWGLGYMSSK…ERKFTLPKYF (291 aa)). Residues Asp-169 and His-201 each act as charge relay system in the active site. Residues Asn-248, Asn-261, and Asn-348 are each glycosylated (N-linked (GlcNAc...) asparagine). Residue Ser-357 is the Charge relay system of the active site. Asn-388 is a glycosylation site (N-linked (GlcNAc...) asparagine).

It belongs to the peptidase S8 family.

It is found in the secreted. Its function is as follows. Secreted subtilisin-like serine protease with keratinolytic activity that contributes to pathogenicity. The protein is Subtilisin-like protease 2 (SUB2) of Trichophyton equinum (Horse ringworm fungus).